Reading from the N-terminus, the 529-residue chain is Beta-hexosaminidase subunit alpha (529 aa).

An N-terminal signal peptide occupies residues 1 to 22 (MTSSRLWFSLLLAAAFAGRATA). The propeptide occupies 23 to 88 (LWPWPQNFQT…PRPYLTGKRH (66 aa)). A disulfide bridge links Cys58 with Cys104. 3 N-linked (GlcNAc...) asparagine glycosylation sites follow: Asn115, Asn157, and Asn295. An intrachain disulfide couples Cys277 to Cys328. Glu323 functions as the Proton donor in the catalytic mechanism. A critical for hydrolysis GM2 gangliosides region spans residues 423–424 (NR). An intrachain disulfide couples Cys505 to Cys522.

The protein belongs to the glycosyl hydrolase 20 family. As to quaternary structure, there are 3 beta-hexosaminidase isozymes: isozyme A (hexosaminidase A) is a heterodimer composed of one subunit alpha and one subunit beta (chain A and B); isozyme B (hexosaminidase B) is a homodimer of two beta subunits (two chains A and B); isozyme S (hexosaminidase S) is a homodimer of two alpha subunits. The composition of the dimer (isozyme A versus isozyme S) has a significant effect on the substrate specificity of the alpha subunit active site. Post-translationally, N-linked glycan at Asn-115 consists of Man(3)-GlcNAc(2). N-linked glycan at Asn-157 consists of either GlcNAc or GlcNAc(2)-Man(7-9). N-linked glycan at Asn-295 consists of either GlcNAc, GlcNAc-Fuc, or GlcNAc(2)-Man(4).

It is found in the lysosome. It catalyses the reaction Hydrolysis of terminal non-reducing N-acetyl-D-hexosamine residues in N-acetyl-beta-D-hexosaminides.. The catalysed reaction is N-acetyl-beta-D-galactosaminyl-(1-&gt;4)-beta-D-3-sulfogalactosyl-(1-&gt;4)-beta-D-glucosyl-(1&lt;-&gt;1')-ceramide + H2O = a beta-D-3-sulfogalactosyl-(1-&gt;4)-beta-D-glucosyl-(1&lt;-&gt;1')-ceramide + N-acetyl-beta-D-galactosamine. It carries out the reaction a ganglioside GM2 (d18:1(4E)) + H2O = a ganglioside GM3 (d18:1(4E)) + N-acetyl-beta-D-galactosamine. The enzyme catalyses a ganglioside GM2 + H2O = a ganglioside GM3 + N-acetyl-beta-D-galactosamine. It catalyses the reaction beta-D-GalNAc-(1-&gt;4)-alpha-L-IdoA-(1-&gt;3)-beta-D-GalNAc-4-sulfate-(1-&gt;4)-alpha-L-IdoA-(1-&gt;3)-D-GalNAc-4-sulfate + H2O = alpha-L-IdoA-(1-&gt;3)-beta-D-GalNAc-4-sulfate-(1-&gt;4)-alpha-L-IdoA-(1-&gt;3)-D-GalNAc-4-sulfate + N-acetyl-D-galactosamine. The catalysed reaction is N-acetyl-beta-D-6-sulfogalactosaminyl-(1-&gt;4)-alpha-L-iduronyl-(1-&gt;3)-N-acetyl-D-6-sulfogalactosamine + H2O = alpha-L-iduronyl-(1-&gt;3)-N-acetyl-D-6-sulfogalactosamine + N-acetyl-D-6-sulfogalactosamine. Addition of GM2A stimulates the hydrolysis of sulfated glycosphingolipid SM2 and the ganglioside GM2. In terms of biological role, hydrolyzes the non-reducing end N-acetyl-D-hexosamine and/or sulfated N-acetyl-D-hexosamine of glycoconjugates, such as the oligosaccharide moieties from proteins and neutral glycolipids, or from certain mucopolysaccharides. The isozyme S is as active as the isozyme A on the anionic bis-sulfated glycans, the chondroitin-6-sulfate trisaccharide (C6S-3), and the dermatan sulfate pentasaccharide, and the sulfated glycosphingolipid SM2. The isozyme B does not hydrolyze each of these substrates, however hydrolyzes efficiently neutral oligosaccharide. Only the isozyme A is responsible for the degradation of GM2 gangliosides in the presence of GM2A. This is Beta-hexosaminidase subunit alpha from Homo sapiens (Human).